The sequence spans 343 residues: Probable dual-specificity RNA methyltransferase RlmN (343 aa).

Residue E91 is the Proton acceptor of the active site. In terms of domain architecture, Radical SAM core spans 97–326 (HPDRITACIS…AEIRREKGAD (230 aa)). A disulfide bridge links C104 with C331. [4Fe-4S] cluster contacts are provided by C111, C115, and C118. S-adenosyl-L-methionine-binding positions include 158–159 (GE), S190, 213–215 (SLH), and N289. C331 acts as the S-methylcysteine intermediate in catalysis.

The protein belongs to the radical SAM superfamily. RlmN family. Requires [4Fe-4S] cluster as cofactor.

It is found in the cytoplasm. The catalysed reaction is adenosine(2503) in 23S rRNA + 2 reduced [2Fe-2S]-[ferredoxin] + 2 S-adenosyl-L-methionine = 2-methyladenosine(2503) in 23S rRNA + 5'-deoxyadenosine + L-methionine + 2 oxidized [2Fe-2S]-[ferredoxin] + S-adenosyl-L-homocysteine. It catalyses the reaction adenosine(37) in tRNA + 2 reduced [2Fe-2S]-[ferredoxin] + 2 S-adenosyl-L-methionine = 2-methyladenosine(37) in tRNA + 5'-deoxyadenosine + L-methionine + 2 oxidized [2Fe-2S]-[ferredoxin] + S-adenosyl-L-homocysteine. Its function is as follows. Specifically methylates position 2 of adenine 2503 in 23S rRNA and position 2 of adenine 37 in tRNAs. The polypeptide is Probable dual-specificity RNA methyltransferase RlmN (Thermotoga petrophila (strain ATCC BAA-488 / DSM 13995 / JCM 10881 / RKU-1)).